The following is a 551-amino-acid chain: MEEELPLFSGDSGKPVQATLSSLKMLDVGKWPIFSLCSEEELQLIRQACVFGSAGNEVLYTTVNDEIFVLGTNCCGCLGLGDVQSTIEPRRLDSLNGKKIACLSYGSGPHIVLATTEGEVFTWGHNAYSQLGNGTTNHGLVPCHISTNLSNKQVIEVACGSYHSLVLTSDGEVFAWGYNNSGQVGSGSTVNQPIPRRVTGCLQNKVVVTIACGQMCCMAVVDTGEVYVWGYNGNGQLGLGNSGNQPTPCRVAALQGIRVQRVACGYAHTLVLTDEGQVYAWGANSYGQLGTGNKSNQSYPTPVTVEKDRIIEIAACHSTHTSAAKTQGGHVYMWGQCRGQSVILPHLTHFSCTDDVFACFATPAVTWRLLSVEPDDHLTVAESLKREFDNPDTADLKFLVDGKYIYAHKVLLKIRCEHFRSSLEDNEDDIVEMSEFSYPVYRAFLEYLYTDSISLSPEEAVGLLDLATFYRENRLKKLCQQTIKQGICEENAIALLSAAVKYDAQDLEEFCFRFCINHLTVVTQTSGFAEMDHDLLKNFISKASRVGAFKN.

6 RCC1 repeats span residues 64-115 (NDEI…VLAT), 117-169 (EGEV…VLTS), 171-222 (GEVF…AVVD), 223-274 (TGEV…VLTD), 276-326 (GQVY…AAKT), and 328-382 (GGHV…TVAE). Residues 394-457 (ADLKFLVDGK…LYTDSISLSP (64 aa)) form the BTB domain.

It localises to the cytoplasmic vesicle. It is found in the secretory vesicle. The protein localises to the acrosome. This is RCC1 and BTB domain-containing protein 2 (RCBTB2) from Homo sapiens (Human).